The sequence spans 370 residues: Histidinol-phosphate aminotransferase 2 (370 aa).

Residue K230 is modified to N6-(pyridoxal phosphate)lysine.

It belongs to the class-II pyridoxal-phosphate-dependent aminotransferase family. Histidinol-phosphate aminotransferase subfamily. Homodimer. The cofactor is pyridoxal 5'-phosphate.

It carries out the reaction L-histidinol phosphate + 2-oxoglutarate = 3-(imidazol-4-yl)-2-oxopropyl phosphate + L-glutamate. Its pathway is amino-acid biosynthesis; L-histidine biosynthesis; L-histidine from 5-phospho-alpha-D-ribose 1-diphosphate: step 7/9. In Pseudomonas fluorescens (strain Pf0-1), this protein is Histidinol-phosphate aminotransferase 2.